A 61-amino-acid polypeptide reads, in one-letter code: 2S seed storage albumin protein (61 aa).

This sequence belongs to the 2S seed storage albumins family. The mature protein consists of a small and a large chain linked by 2 disulfide bonds.

Its function is as follows. This is a 2S seed storage protein. Inhibits cell-free protein synthesis. This Cucurbita moschata (Winter crookneck squash) protein is 2S seed storage albumin protein.